Reading from the N-terminus, the 267-residue chain is U6 snRNA phosphodiesterase 1 (267 aa).

Residues 1 to 13 (MSSAPLVGYSSSG) are compositionally biased toward polar residues. A disordered region spans residues 1 to 74 (MSSAPLVGYS…DSAKHGGRIR (74 aa)). The active-site Proton acceptor is the His122. 122–124 (HVS) serves as a coordination point for AMP. UMP-binding positions include Gln166, Tyr204, and 208 to 212 (SFHIS). AMP contacts are provided by residues Tyr204 and 206–212 (DPSFHIS). Catalysis depends on His210, which acts as the Proton donor.

The protein belongs to the 2H phosphoesterase superfamily. USB1 family. In terms of assembly, interacts with PLRG1, CDC5L and PRPF19.

It is found in the nucleus. It carries out the reaction a 3'-end uridylyl-uridine-RNA = a 3'-end 2',3'-cyclophospho-uridine-RNA + uridine. The enzyme catalyses a 3'-end uridylyl-adenosine-RNA = a 3'-end 2',3'-cyclophospho-uridine-RNA + adenosine. 3'-5' RNA exonuclease that trims the 3' end of oligo(U) and oligo(A) tracts of the pre-U6 small nuclear RNA (snRNA) molecule, leading to the formation of a mature U6 snRNA 3' end-terminated with a 2',3'-cyclic phosphate. Participates in the U6 snRNA 3' end processing that prevents U6 snRNA degradation. In addition also removes uridines from the 3' end of U6atac snRNA and possibly the vault RNA VTRNA1-1. In Mus musculus (Mouse), this protein is U6 snRNA phosphodiesterase 1.